The primary structure comprises 344 residues: Protein RecA (344 aa).

65–72 serves as a coordination point for ATP; sequence GPESSGKT.

The protein belongs to the RecA family.

The protein resides in the cytoplasm. Its function is as follows. Can catalyze the hydrolysis of ATP in the presence of single-stranded DNA, the ATP-dependent uptake of single-stranded DNA by duplex DNA, and the ATP-dependent hybridization of homologous single-stranded DNAs. It interacts with LexA causing its activation and leading to its autocatalytic cleavage. This is Protein RecA from Campylobacter lari.